The following is a 1205-amino-acid chain: Plasma membrane calcium-transporting ATPase 1 (1205 aa).

The Cytoplasmic segment spans residues 2 to 104 (GDMANNSVAY…KTFLQLVWEA (103 aa)). Residues 94–111 (PKTFLQLVWEALQDVTLI) form a calmodulin-binding subdomain A region. Residues 105 to 125 (LQDVTLIILEIAAVVSLGLSF) form a helical membrane-spanning segment. The Extracellular portion of the chain corresponds to 126 to 153 (YQPPGGNEALCGSVNVGEEEEESEAGWI). Residues 154–174 (EGAAILLSVVCVVLVTAFNDW) traverse the membrane as a helical segment. The Cytoplasmic segment spans residues 175–351 (SKEKQFRGLQ…KEKSVLQGKL (177 aa)). The tract at residues 296 to 343 (EEEKEKEKKDKKTKAQDGAAMEMQPLKSEDGVDGDEKDKKRSNLPKKE) is disordered. Composition is skewed to basic and acidic residues over residues 300 to 310 (EKEKKDKKTKA) and 322 to 343 (KSEDGVDGDEKDKKRSNLPKKE). Residues 352-371 (TKLAVQIGKAGLLMSAITVI) form a helical membrane-spanning segment. Residues 372-403 (ILVLYFVIDTSWVQKRPWLAECTPIYIQYFVK) lie on the Extracellular side of the membrane. The chain crosses the membrane as a helical span at residues 404 to 424 (FFIIGVTVLVVAVPEGLPLAV). Residues 425–840 (TISLAYSVKK…RNVYDSISKF (416 aa)) are Cytoplasmic-facing. The 4-aspartylphosphate intermediate role is filled by Asp-460. Residues Asp-460, Thr-462, and Asp-782 each contribute to the Mg(2+) site. The chain crosses the membrane as a helical span at residues 841-861 (LQFQLTVNVVAVIVAFTGACI). Topologically, residues 862 to 868 (TQDSPLK) are extracellular. Residues 869–889 (AVQMLWVNLIMDTLASLALAT) form a helical membrane-spanning segment. The Cytoplasmic segment spans residues 890-912 (EPPTEALLLRKPYGRNKPLISRT). The helical transmembrane segment at 913–933 (MMKNILGHAFYQLVVVFTLLF) threads the bilayer. At 934–956 (AGEKIFDIDSGRNAPLHAPPSEH) the chain is on the extracellular side. Residues 957–976 (YTIVFNTFVMMQLFNEINAR) form a helical membrane-spanning segment. Topologically, residues 977 to 990 (KIHGERNVFEGIFN) are cytoplasmic. A helical membrane pass occupies residues 991-1012 (NAIFCTIVLGTFVVQIIIVQFG). Residues 1013–1024 (GKPFSCSKLSIE) lie on the Extracellular side of the membrane. Residues 1025 to 1045 (QWLWSVFLGMGTLLWGQLIST) traverse the membrane as a helical segment. The Cytoplasmic portion of the chain corresponds to 1046–1205 (IPTSRLKFLK…SPLHSLETSL (160 aa)). Position 1101 is a phosphothreonine; by PKC (Thr-1101). Residues 1145 to 1205 (PLIDDTDAED…SPLHSLETSL (61 aa)) form a disordered region. Polar residues predominate over residues 1183–1205 (TDMNKSATSSSPGSPLHSLETSL).

The protein belongs to the cation transport ATPase (P-type) (TC 3.A.3) family. Type IIB subfamily.

The protein resides in the cell membrane. The catalysed reaction is Ca(2+)(in) + ATP + H2O = Ca(2+)(out) + ADP + phosphate + H(+). In terms of biological role, catalyzes the hydrolysis of ATP coupled with the transport of calcium from the cytoplasm to the extracellular space thereby maintaining intracellular calcium homeostasis. This chain is Plasma membrane calcium-transporting ATPase 1, found in Gallus gallus (Chicken).